Consider the following 292-residue polypeptide: Protein sarah (292 aa).

Low complexity predominate over residues 1 to 51 (MSDAAKSNNNASADAPDPTTPDATGEADAANAATPTTPRGNHNNNNSANGR). The segment at 1 to 111 (MSDAAKSNNN…TEPEVDADSF (111 aa)) is disordered. Phosphoserine occurs at positions 67, 72, and 100. Acidic residues predominate over residues 98–111 (VDSDTEPEVDADSF). Thr-102 and Thr-196 each carry phosphothreonine. 2 positions are modified to phosphoserine: Ser-215 and Ser-219. Thr-246 carries the phosphothreonine modification.

This sequence belongs to the RCAN family. As to quaternary structure, interacts with Pp2B-14D, CanA-14F and CanB2. Phosphorylation at Ser-215 and Ser-219 is essential for calcineurin activation and completion of female meiosis. Sgg is required for phosphorylation of Ser-215 in activated eggs. Ser-100, Thr-102 and Ser-219 are highly phosphorylated in both ovaries and activated eggs; however, phosphorylation at Ser-100 or Thr-102 is not required for sra function in completion of female meiosis. In terms of tissue distribution, expressed in central nervous system of the third instar larvae, with a relatively intense signal in the brain and weak signals in the ventral ganglion. Relatively low, but ubiquitous expression level is observed in leg and wing imaginal disks, no signal is detected in the eye-antennal disks. Expressed in all neurons in the adult brain.

Required for elongation of meiosis I spindle. Critical for ovulation, meiotic progression in oocytes and female courtship behavior, including their postmating changes. Regulates female meiosis by controlling calcineurin activity in the germline. Has a role in calcium signaling during egg activation; bcd mRNA polyadenylation and translation in the oocyte. The sequence is that of Protein sarah (sra) from Drosophila melanogaster (Fruit fly).